A 1343-amino-acid chain; its full sequence is Kinesin-like protein KIF7 (1343 aa).

A Kinesin motor domain is found at 15 to 349 (PVRVALRVRP…LNYASRAQNI (335 aa)). 94–101 (GQTGSGKT) is a binding site for ATP. Disordered regions lie at residues 356–382 (NWRPEAERPPEETASGARGPPRHRSET), 451–483 (RSALSSASGPDSGIESASVEDQAAQGAGGRKED), and 611–639 (EVNRLGSGSSAASEEEEEEEEPPRRTLHL). The segment at 358-479 (RPEAERPPEE…EDQAAQGAGG (122 aa)) is interaction with DLG5. An interaction with SMO region spans residues 358-1206 (RPEAERPPEE…LGRYMWINQE (849 aa)). Residues 480-542 (RKEDEGAQQL…ELRLRLELVR (63 aa)) are a coiled coil. Positions 513 to 775 (AMEQYKLQSD…LRELEGKELQ (263 aa)) are sufficient for interaction with NPHP1. Coiled coils occupy residues 698 to 1057 (ASEW…AAIE) and 1109 to 1211 (TLRE…KQKL). Residue Ser898 is modified to Phosphoserine. Disordered stretches follow at residues 1219–1238 (HSRGGEKRSLCSEGRQAPGN) and 1310–1343 (GEAGLPWNFGPLSKPRRELRRASPGMIDVRKNPL).

Belongs to the TRAFAC class myosin-kinesin ATPase superfamily. Kinesin family. KIF27 subfamily. In terms of assembly, can form homodimers and interacts with microtubules. Interacts with GLI1, GLI2, GLI3, SMO and SUFU. Interacts with NPHP1. Interacts with SMO and DLG5 (via PDZ4 or guanylate kinase-like domain). Polyubiquitinated by UBR3. As to expression, embryonic stem cells, melanotic melanoma and Jurkat T-cells. Expressed in heart, lung, liver, kidney, testis, retina, placenta, pancreas, colon, small intestin, prostate and thymus.

The protein localises to the cell projection. It localises to the cilium. Its subcellular location is the cytoplasm. The protein resides in the cytoskeleton. It is found in the cilium basal body. Essential for hedgehog signaling regulation: acts both as a negative and positive regulator of sonic hedgehog (Shh) and Indian hedgehog (Ihh) pathways, acting downstream of SMO, through both SUFU-dependent and -independent mechanisms. Involved in the regulation of microtubular dynamics. Required for proper organization of the ciliary tip and control of ciliary localization of SUFU-GLI2 complexes. Required for localization of GLI3 to cilia in response to Shh. Negatively regulates Shh signaling by preventing inappropriate activation of the transcriptional activator GLI2 in the absence of ligand. Positively regulates Shh signaling by preventing the processing of the transcription factor GLI3 into its repressor form. In keratinocytes, promotes the dissociation of SUFU-GLI2 complexes, GLI2 nuclear translocation and Shh signaling activation. Involved in the regulation of epidermal differentiation and chondrocyte development. In Homo sapiens (Human), this protein is Kinesin-like protein KIF7 (KIF7).